A 340-amino-acid polypeptide reads, in one-letter code: tRNA N6-adenosine threonylcarbamoyltransferase (340 aa).

2 residues coordinate Fe cation: His-115 and His-119. Substrate is bound by residues 138–142, Asp-171, Gly-184, Asp-188, and Asn-278; that span reads VVSGG. Position 306 (Asp-306) interacts with Fe cation.

It belongs to the KAE1 / TsaD family. The cofactor is Fe(2+).

The protein localises to the cytoplasm. The catalysed reaction is L-threonylcarbamoyladenylate + adenosine(37) in tRNA = N(6)-L-threonylcarbamoyladenosine(37) in tRNA + AMP + H(+). In terms of biological role, required for the formation of a threonylcarbamoyl group on adenosine at position 37 (t(6)A37) in tRNAs that read codons beginning with adenine. Is involved in the transfer of the threonylcarbamoyl moiety of threonylcarbamoyl-AMP (TC-AMP) to the N6 group of A37, together with TsaE and TsaB. TsaD likely plays a direct catalytic role in this reaction. In Clostridium botulinum (strain Kyoto / Type A2), this protein is tRNA N6-adenosine threonylcarbamoyltransferase.